Reading from the N-terminus, the 141-residue chain is Deoxyuridine 5'-triphosphate nucleotidohydrolase (141 aa).

This sequence belongs to the dUTPase family. Mg(2+) serves as cofactor.

It catalyses the reaction dUTP + H2O = dUMP + diphosphate + H(+). Its pathway is pyrimidine metabolism; dUMP biosynthesis; dUMP from dCTP (dUTP route): step 2/2. Its function is as follows. This enzyme is involved in nucleotide metabolism: it produces dUMP, the immediate precursor of thymidine nucleotides and it decreases the intracellular concentration of dUTP so that uracil cannot be incorporated into DNA. The chain is Deoxyuridine 5'-triphosphate nucleotidohydrolase from Chlorella (PBCV-1).